A 235-amino-acid chain; its full sequence is Eukaryotic translation initiation factor 4E-1 (235 aa).

Residues 16–25 are compositionally biased toward basic and acidic residues; it reads VNKHRGVRSD. Residues 16-56 are disordered; the sequence is VNKHRGVRSDGEEDEQLEEGEIVGGDADTLSSSSSSRPGTA. Positions 26-36 are enriched in acidic residues; it reads GEEDEQLEEGE. EIF4G-binding regions lie at residues 60 to 63 and 70 to 106; these read HPLE and FDTP…NNIH. MRNA is bound by residues 78–83, lysine 110, and 128–129; these read KQVAWG and WE. Residues cysteine 133 and cysteine 171 are joined by a disulfide bond. Residues 154–163 form an EIF4G-binding region; it reads YTLLAMIGEQ. MRNA is bound by residues 178–183 and 223–227; these read RARQEK and KTLDR.

Belongs to the eukaryotic initiation factor 4E family. EIF4F is a multi-subunit complex, the composition of which varies with external and internal environmental conditions. It is composed of at least EIF4A, EIF4E and EIF4G. EIF4E is also known to interact with other partners. In higher plants two isoforms of EIF4F have been identified, named isoform EIF4F and isoform EIF(iso)4F. Isoform EIF4F has subunits p220 and p26, whereas isoform EIF(iso)4F has subunits p82 and p28. As to quaternary structure, (Microbial infection) Interacts with potyvirus viral genome-linked protein (VPg); this interaction is possible in susceptible hosts but impaired in resistant plants. In terms of processing, according to the redox status, the Cys-133-Cys-171 disulfide bridge may have a role in regulating protein function by affecting its ability to bind capped mRNA.

It localises to the nucleus. It is found in the cytoplasm. Component of the protein complex eIF4F, which is involved in the recognition of the mRNA cap, ATP-dependent unwinding of 5'-terminal secondary structure and recruitment of mRNA to the ribosome. Recognizes and binds the 7-methylguanosine-containing mRNA cap during an early step in the initiation of protein synthesis and facilitates ribosome binding by inducing the unwinding of the mRNAs secondary structures. Key component of recessive resistance to potyviruses. In terms of biological role, (Microbial infection) Susceptibility host factor required for viral infection by recruiting viral RNAs to the host ribosomal complex via an interaction with viral genome-linked protein (VPg). In Lactuca sativa (Garden lettuce), this protein is Eukaryotic translation initiation factor 4E-1.